The chain runs to 361 residues: Cyclin-D3-3 (361 aa).

The protein belongs to the cyclin family. Cyclin D subfamily.

Promotes divisions in the guard cells (GCs) after the guard mother cells (GMC) symmetric division. This Arabidopsis thaliana (Mouse-ear cress) protein is Cyclin-D3-3 (CYCD3-3).